A 445-amino-acid polypeptide reads, in one-letter code: Sodium/proton-dependent alanine carrier protein (445 aa).

9 consecutive transmembrane segments (helical) span residues 41-61 (IAYG…IGAA), 103-123 (AAII…SIAD), 129-149 (FGIP…FTIF), 159-179 (AEIV…AIIA), 188-208 (VFGL…GILG), 249-269 (AFSI…MILF), 304-324 (TLFP…FAFT), 349-369 (AFFA…VKTA), and 375-395 (MGDI…LLLF).

This sequence belongs to the alanine or glycine:cation symporter (AGCS) (TC 2.A.25) family. The N-terminus is blocked.

The protein resides in the cell membrane. Functionally, mediates the active transport of alanine, driven by either an H(+) or Na(+) gradient. The polypeptide is Sodium/proton-dependent alanine carrier protein (Bacillus sp. (strain PS3)).